The sequence spans 452 residues: Methionine aminopeptidase 2 (452 aa).

The segment at 1 to 96 (MAVQALPEIN…VPLSTLFPNN (96 aa)) is disordered. Positions 18-35 (GAANAAAKGQAAQGTAGN) are enriched in low complexity. Over residues 36–53 (DDAENDESDEDKEDEQEV) the composition is skewed to acidic residues. A compositionally biased stretch (basic residues) spans 62 to 77 (GKKKKKKTKKKKKKGT). His-202 is a substrate binding site. The a divalent metal cation site is built by Asp-222, Asp-233, and His-302. His-310 lines the substrate pocket. Residues Glu-338 and Glu-433 each coordinate a divalent metal cation.

The protein belongs to the peptidase M24A family. Methionine aminopeptidase eukaryotic type 2 subfamily. Requires Co(2+) as cofactor. Zn(2+) is required as a cofactor. Mn(2+) serves as cofactor. It depends on Fe(2+) as a cofactor.

The protein localises to the cytoplasm. It catalyses the reaction Release of N-terminal amino acids, preferentially methionine, from peptides and arylamides.. In terms of biological role, cotranslationally removes the N-terminal methionine from nascent proteins. The N-terminal methionine is often cleaved when the second residue in the primary sequence is small and uncharged (Met-Ala-, Cys, Gly, Pro, Ser, Thr, or Val). The polypeptide is Methionine aminopeptidase 2 (Coccidioides posadasii (strain C735) (Valley fever fungus)).